Consider the following 118-residue polypeptide: MAHNLALGAHGEDLAARYLTEAGMEIVDRNWRSRYGEVDLIAAEGDWLVFVEVKTRRGLGYGSPAEAVTFSKQRRIRLLAVEWLRDSGRHWSRVRFDVVAIMIGHGPQPQIEHVRDAF.

The protein belongs to the UPF0102 family.

The polypeptide is UPF0102 protein RHA1_ro06551 (Rhodococcus jostii (strain RHA1)).